We begin with the raw amino-acid sequence, 239 residues long: RNA polymerase sigma factor FliA (239 aa).

The tract at residues 16-88 (LWQRYVPLVR…MLDELRSRDW (73 aa)) is sigma-70 factor domain-2. The short motif at 43–46 (DLLQ) is the Interaction with polymerase core subunit RpoC element. The segment at 96–166 (NAREVAQAMG…IELVTEEHQQ (71 aa)) is sigma-70 factor domain-3. The sigma-70 factor domain-4 stretch occupies residues 185–233 (AIESLPEREQLVLTLYYQEELNLKEIGAVLEVGESRVSQLHSQAIKRLR). The segment at residues 207–226 (LKEIGAVLEVGESRVSQLHS) is a DNA-binding region (H-T-H motif).

The protein belongs to the sigma-70 factor family. FliA subfamily.

It localises to the cytoplasm. Sigma factors are initiation factors that promote the attachment of RNA polymerase to specific initiation sites and are then released. This sigma factor controls the expression of flagella-related genes. This chain is RNA polymerase sigma factor FliA, found in Salmonella typhi.